The chain runs to 477 residues: Metallopeptidase AprA (477 aa).

Residues 1–20 (MSKAKDKAIVSAAQASTAYS) form the signal peptide. Position 183 (histidine 183) interacts with Zn(2+). The active site involves glutamate 184. Positions 187 and 193 each coordinate Zn(2+). 36 residues coordinate Ca(2+): arginine 264, glycine 266, threonine 268, aspartate 296, glycine 298, glycine 299, aspartate 301, threonine 338, glutamate 340, glycine 345, glycine 347, aspartate 349, asparagine 354, alanine 356, asparagine 358, glycine 362, glycine 363, alanine 364, glycine 365, aspartate 367, glycine 371, alanine 372, glycine 373, glycine 374, aspartate 376, glycine 380, glycine 381, alanine 382, glycine 383, aspartate 385, aspartate 394, aspartate 401, aspartate 411, aspartate 453, serine 455, and aspartate 461. 3 Hemolysin-type calcium-binding repeats span residues 343-360 (FGGAGNDLIIGNNAANVI), 361-378 (KGGAGNDLIYGAGGADQL), and 379-391 (WGGAGNDTFVFGA).

The protein belongs to the peptidase M10B family. Ca(2+) serves as cofactor. It depends on Zn(2+) as a cofactor.

Its subcellular location is the secreted. Its activity is regulated as follows. Is completely inhibited by the metal cation chelators 1,10-phenanthroline and EDTA, but PMSF, pepstatin A and E-64 have no effect on activity. In terms of biological role, peptidase able to cleave azocasein and the milk substrates beta-casein and Na-caseinate. Can withstand UHT processing of milk, and is able to spoil UHT milk over the storage period. The protein is Metallopeptidase AprA of Pseudomonas marginalis (Pseudomonas panacis).